The sequence spans 309 residues: Mitochondrial brown fat uncoupling protein 1 (309 aa).

Residues 1–10 lie on the Mitochondrial intermembrane side of the membrane; it reads MLRAPGSDAP. A helical membrane pass occupies residues 11-32; it reads PTLSVRIAAAAGAACLADMITF. 3 Solcar repeats span residues 11–104, 113–203, and 212–297; these read PTLS…VREW, ASLG…MKEA, and DDLP…LKRE. The Mitochondrial matrix portion of the chain corresponds to 33-75; that stretch reads PLDTAKVRLQIQGEGQGQPPRAPRYRGVLGTVATLARTEGLQK. Arg58 lines the fatty acid 16:0 pocket. Residues 76-98 traverse the membrane as a helical segment; it reads LYSGLPAGLQRQVGFASLRIGLY. Topologically, residues 99–118 are mitochondrial intermembrane; the sequence is DSVREWLSPGQGAAASLGSR. The helical transmembrane segment at 119 to 135 threads the bilayer; the sequence is ISAGVMTGGAAVFIGQP. Topologically, residues 136–180 are mitochondrial matrix; that stretch reads TEVVKVRLQAQSHLHGRKPRYTGTYNAYRIIATTEGLTGLWKGTT. A helical transmembrane segment spans residues 181-197; it reads PNLMRNVIINCTELVTY. Residues 198–214 are Mitochondrial intermembrane-facing; that stretch reads DLMKEALVKNHLLADDL. A helical membrane pass occupies residues 215-234; the sequence is PCHFLSALVAGFCTTVLSSP. Topologically, residues 235–268 are mitochondrial matrix; that stretch reads VDVVKTRFVNSVPEQYTSVPNCAMTMLTKEGPLA. Cys256 is subject to Cysteine sulfenic acid (-SOH). The chain crosses the membrane as a helical span at residues 269–291; the sequence is FFKGFVPSFLRLGSWNVIMFVCF. Lys271 contributes to the fatty acid 16:0 binding site. Over 292–309 the chain is Mitochondrial intermembrane; that stretch reads EQLKRELMKSGRTVDCAT.

This sequence belongs to the mitochondrial carrier (TC 2.A.29) family. As to quaternary structure, most probably functions as a monomer. Binds one purine nucleotide per monomer. However, has also been suggested to function as a homodimer or a homotetramer. Tightly associates with cardiolipin in the mitochondrion inner membrane; may stabilize and regulate its activity. In terms of processing, may undergo sulfenylation upon cold exposure. May increase the sensitivity of UCP1 thermogenic function to the activation by noradrenaline probably through structural effects. May undergo ubiquitin-mediated proteasomal degradation.

The protein resides in the mitochondrion inner membrane. The catalysed reaction is H(+)(in) = H(+)(out). Its activity is regulated as follows. Has no constitutive proton transporter activity and has to be activated by long-chain fatty acids/LCFAs. Inhibited by purine nucleotides. Both purine nucleotides and LCFAs bind the cytosolic side of the transporter and directly compete to activate or inhibit it. Activated by noradrenaline and reactive oxygen species. Despite lacking canonical translational encoding for selenocysteine, a small pool of the protein has been observed to selectively incorporate selenocysteine at 'Cys-256'. Selenocysteine-modified protein is highly sensitive to redox modification and may constitute a pool of protein highly sensitive to activation by elevated levels of reactive oxygen species (ROS). In terms of biological role, mitochondrial protein responsible for thermogenic respiration, a specialized capacity of brown adipose tissue and beige fat that participates in non-shivering adaptive thermogenesis to temperature and diet variations and more generally to the regulation of energy balance. Functions as a long-chain fatty acid/LCFA and proton symporter, simultaneously transporting one LCFA and one proton through the inner mitochondrial membrane. However, LCFAs remaining associated with the transporter via their hydrophobic tails, it results in an apparent transport of protons activated by LCFAs. Thereby, dissipates the mitochondrial proton gradient and converts the energy of substrate oxydation into heat instead of ATP. Regulates the production of reactive oxygen species/ROS by mitochondria. This Canis lupus familiaris (Dog) protein is Mitochondrial brown fat uncoupling protein 1.